We begin with the raw amino-acid sequence, 38 residues long: uncharacterized protein (38 aa).

Belongs to the asfivirus C84L family.

This is an uncharacterized protein from Ornithodoros (relapsing fever ticks).